The primary structure comprises 101 residues: Small ribosomal subunit protein uS14A (101 aa).

The interval 31-69 (IAAPGSSPEERAAAQQELRRQPRDASATRLRNRDAVDGR) is disordered. Basic and acidic residues predominate over residues 38 to 53 (PEERAAAQQELRRQPR).

It belongs to the universal ribosomal protein uS14 family. Part of the 30S ribosomal subunit. Contacts proteins S3 and S10.

In terms of biological role, binds 16S rRNA, required for the assembly of 30S particles and may also be responsible for determining the conformation of the 16S rRNA at the A site. The polypeptide is Small ribosomal subunit protein uS14A (Saccharopolyspora erythraea (strain ATCC 11635 / DSM 40517 / JCM 4748 / NBRC 13426 / NCIMB 8594 / NRRL 2338)).